A 498-amino-acid polypeptide reads, in one-letter code: Glycerol kinase (498 aa).

ADP is bound at residue T12. ATP is bound by residues T12, T13, and S14. T12 contacts sn-glycerol 3-phosphate. R16 contacts ADP. Sn-glycerol 3-phosphate contacts are provided by R82, E83, Y134, and D244. Glycerol is bound by residues R82, E83, Y134, D244, and Q245. ADP-binding residues include T266 and G310. ATP is bound by residues T266, G310, Q314, and G411. ADP-binding residues include G411 and N415.

This sequence belongs to the FGGY kinase family.

The catalysed reaction is glycerol + ATP = sn-glycerol 3-phosphate + ADP + H(+). Its pathway is polyol metabolism; glycerol degradation via glycerol kinase pathway; sn-glycerol 3-phosphate from glycerol: step 1/1. Inhibited by fructose 1,6-bisphosphate (FBP). In terms of biological role, key enzyme in the regulation of glycerol uptake and metabolism. Catalyzes the phosphorylation of glycerol to yield sn-glycerol 3-phosphate. In Azorhizobium caulinodans (strain ATCC 43989 / DSM 5975 / JCM 20966 / LMG 6465 / NBRC 14845 / NCIMB 13405 / ORS 571), this protein is Glycerol kinase.